A 209-amino-acid chain; its full sequence is Thiamine-phosphate synthase (209 aa).

4-amino-2-methyl-5-(diphosphooxymethyl)pyrimidine is bound by residues 36–40 and Asn68; that span reads QLRDK. Mg(2+)-binding residues include Asp69 and Asp88. Ser107 serves as a coordination point for 4-amino-2-methyl-5-(diphosphooxymethyl)pyrimidine. 133-135 serves as a coordination point for 2-[(2R,5Z)-2-carboxy-4-methylthiazol-5(2H)-ylidene]ethyl phosphate; that stretch reads TNS. Lys136 is a 4-amino-2-methyl-5-(diphosphooxymethyl)pyrimidine binding site. 2-[(2R,5Z)-2-carboxy-4-methylthiazol-5(2H)-ylidene]ethyl phosphate-binding positions include Gly164 and 184 to 185; that span reads IT.

It belongs to the thiamine-phosphate synthase family. Requires Mg(2+) as cofactor.

The enzyme catalyses 2-[(2R,5Z)-2-carboxy-4-methylthiazol-5(2H)-ylidene]ethyl phosphate + 4-amino-2-methyl-5-(diphosphooxymethyl)pyrimidine + 2 H(+) = thiamine phosphate + CO2 + diphosphate. The catalysed reaction is 2-(2-carboxy-4-methylthiazol-5-yl)ethyl phosphate + 4-amino-2-methyl-5-(diphosphooxymethyl)pyrimidine + 2 H(+) = thiamine phosphate + CO2 + diphosphate. It catalyses the reaction 4-methyl-5-(2-phosphooxyethyl)-thiazole + 4-amino-2-methyl-5-(diphosphooxymethyl)pyrimidine + H(+) = thiamine phosphate + diphosphate. Its pathway is cofactor biosynthesis; thiamine diphosphate biosynthesis; thiamine phosphate from 4-amino-2-methyl-5-diphosphomethylpyrimidine and 4-methyl-5-(2-phosphoethyl)-thiazole: step 1/1. Condenses 4-methyl-5-(beta-hydroxyethyl)thiazole monophosphate (THZ-P) and 2-methyl-4-amino-5-hydroxymethyl pyrimidine pyrophosphate (HMP-PP) to form thiamine monophosphate (TMP). This chain is Thiamine-phosphate synthase, found in Shouchella clausii (strain KSM-K16) (Alkalihalobacillus clausii).